A 118-amino-acid polypeptide reads, in one-letter code: Nucleoid-associated protein CTN_1899 (118 aa).

The protein belongs to the YbaB/EbfC family. Homodimer.

It localises to the cytoplasm. Its subcellular location is the nucleoid. Functionally, binds to DNA and alters its conformation. May be involved in regulation of gene expression, nucleoid organization and DNA protection. This Thermotoga neapolitana (strain ATCC 49049 / DSM 4359 / NBRC 107923 / NS-E) protein is Nucleoid-associated protein CTN_1899.